A 157-amino-acid chain; its full sequence is 2-C-methyl-D-erythritol 2,4-cyclodiphosphate synthase (157 aa).

A divalent metal cation-binding residues include Asp8 and His10. 4-CDP-2-C-methyl-D-erythritol 2-phosphate contacts are provided by residues Asp8 to His10 and His34 to Ser35. His42 is a binding site for a divalent metal cation. 4-CDP-2-C-methyl-D-erythritol 2-phosphate is bound by residues Asp56–Gly58, Phe61–Asp65, Ala100–Ala106, Thr132–Glu135, and Phe139.

It belongs to the IspF family. Homotrimer. A divalent metal cation is required as a cofactor.

It catalyses the reaction 4-CDP-2-C-methyl-D-erythritol 2-phosphate = 2-C-methyl-D-erythritol 2,4-cyclic diphosphate + CMP. It participates in isoprenoid biosynthesis; isopentenyl diphosphate biosynthesis via DXP pathway; isopentenyl diphosphate from 1-deoxy-D-xylulose 5-phosphate: step 4/6. In terms of biological role, involved in the biosynthesis of isopentenyl diphosphate (IPP) and dimethylallyl diphosphate (DMAPP), two major building blocks of isoprenoid compounds. Catalyzes the conversion of 4-diphosphocytidyl-2-C-methyl-D-erythritol 2-phosphate (CDP-ME2P) to 2-C-methyl-D-erythritol 2,4-cyclodiphosphate (ME-CPP) with a corresponding release of cytidine 5-monophosphate (CMP). This Clostridium novyi (strain NT) protein is 2-C-methyl-D-erythritol 2,4-cyclodiphosphate synthase.